The following is a 61-amino-acid chain: Sperm protamine P1 (61 aa).

The tract at residues 1–61 (MARFRRSRSR…RSSRRSRRRN (61 aa)) is disordered.

Belongs to the protamine P1 family. As to expression, testis.

The protein localises to the nucleus. The protein resides in the chromosome. In terms of biological role, protamines substitute for histones in the chromatin of sperm during the haploid phase of spermatogenesis. They compact sperm DNA into a highly condensed, stable and inactive complex. The sequence is that of Sperm protamine P1 (PRM1) from Ornithorhynchus anatinus (Duckbill platypus).